The sequence spans 206 residues: LexA repressor (206 aa).

The H-T-H motif DNA-binding region spans 28 to 48; it reads RAEIARELGFRSANAAEEHLK. Residues Ser-123 and Lys-160 each act as for autocatalytic cleavage activity in the active site.

It belongs to the peptidase S24 family. As to quaternary structure, homodimer.

The catalysed reaction is Hydrolysis of Ala-|-Gly bond in repressor LexA.. In terms of biological role, represses a number of genes involved in the response to DNA damage (SOS response), including recA and lexA. In the presence of single-stranded DNA, RecA interacts with LexA causing an autocatalytic cleavage which disrupts the DNA-binding part of LexA, leading to derepression of the SOS regulon and eventually DNA repair. This chain is LexA repressor, found in Vibrio campbellii (strain ATCC BAA-1116).